The primary structure comprises 186 residues: Ribosome-recycling factor (186 aa).

The protein belongs to the RRF family.

The protein resides in the cytoplasm. In terms of biological role, responsible for the release of ribosomes from messenger RNA at the termination of protein biosynthesis. May increase the efficiency of translation by recycling ribosomes from one round of translation to another. The chain is Ribosome-recycling factor from Bartonella henselae (strain ATCC 49882 / DSM 28221 / CCUG 30454 / Houston 1) (Rochalimaea henselae).